Reading from the N-terminus, the 326-residue chain is CRISPR-associated endonuclease Cas1 (326 aa).

Positions 191, 255, and 269 each coordinate Mn(2+).

The protein belongs to the CRISPR-associated endonuclease Cas1 family. In terms of assembly, homodimer. Interacts with Cas3, in the absence of crRNA. The cofactor is Mg(2+). Mn(2+) serves as cofactor.

Its function is as follows. CRISPR (clustered regularly interspaced short palindromic repeat), is an adaptive immune system that provides protection against mobile genetic elements (viruses, transposable elements and conjugative plasmids). CRISPR clusters contain sequences complementary to antecedent mobile elements and target invading nucleic acids. CRISPR clusters are transcribed and processed into CRISPR RNA (crRNA). Acts as a dsDNA endonuclease. Involved in the integration of spacer DNA into the CRISPR cassette. In Pectobacterium atrosepticum (strain SCRI 1043 / ATCC BAA-672) (Erwinia carotovora subsp. atroseptica), this protein is CRISPR-associated endonuclease Cas1.